The chain runs to 547 residues: Chaperonin GroEL (547 aa).

ATP-binding positions include 30-33 (TLGP), lysine 51, 87-91 (DGTTT), glycine 415, and aspartate 496.

The protein belongs to the chaperonin (HSP60) family. Forms a cylinder of 14 subunits composed of two heptameric rings stacked back-to-back. Interacts with the co-chaperonin GroES.

It is found in the cytoplasm. It catalyses the reaction ATP + H2O + a folded polypeptide = ADP + phosphate + an unfolded polypeptide.. Its function is as follows. Together with its co-chaperonin GroES, plays an essential role in assisting protein folding. The GroEL-GroES system forms a nano-cage that allows encapsulation of the non-native substrate proteins and provides a physical environment optimized to promote and accelerate protein folding. This is Chaperonin GroEL from Actinobacillus pleuropneumoniae serotype 5b (strain L20).